The following is a 677-amino-acid chain: Zinc finger CCCH domain-containing protein 23 (677 aa).

The interval P66–G117 is disordered. Over residues A69–P82 the composition is skewed to low complexity. The segment covering P98–M113 has biased composition (polar residues). Residues G228–L255 form a C3H1-type zinc finger. Positions R359–K435 constitute an RRM domain. A coiled-coil region spans residues A480 to Q513. The span at T535–L562 shows a compositional bias: polar residues. The interval T535–A607 is disordered. Residues R589–L601 show a composition bias toward basic and acidic residues.

This chain is Zinc finger CCCH domain-containing protein 23, found in Oryza sativa subsp. japonica (Rice).